The primary structure comprises 542 residues: Putative cysteine ligase BshC (542 aa).

A coiled-coil region spans residues 458-487 (VAKNAAIIQAQIEFLQQTLERALLSKHEVE).

It belongs to the BshC family.

Functionally, involved in bacillithiol (BSH) biosynthesis. May catalyze the last step of the pathway, the addition of cysteine to glucosamine malate (GlcN-Mal) to generate BSH. The chain is Putative cysteine ligase BshC from Geobacillus thermodenitrificans (strain NG80-2).